A 377-amino-acid polypeptide reads, in one-letter code: Chaperone protein DnaJ (377 aa).

Residues 5 to 70 form the J domain; sequence DYYEVLGVGR…NKKAAYDQFG (66 aa). Residues 133–211 form a CR-type zinc finger; it reads GLTKELRIPT…CHGDGRVEKT (79 aa). Zn(2+)-binding residues include cysteine 146, cysteine 149, cysteine 163, cysteine 166, cysteine 185, cysteine 188, cysteine 199, and cysteine 202. CXXCXGXG motif repeat units follow at residues 146–153, 163–170, 185–192, and 199–206; these read CDVCDGSG, CGTCHGQG, CPTCHGRG, and CTKCHGDG.

This sequence belongs to the DnaJ family. As to quaternary structure, homodimer. It depends on Zn(2+) as a cofactor.

Its subcellular location is the cytoplasm. Functionally, participates actively in the response to hyperosmotic and heat shock by preventing the aggregation of stress-denatured proteins and by disaggregating proteins, also in an autonomous, DnaK-independent fashion. Unfolded proteins bind initially to DnaJ; upon interaction with the DnaJ-bound protein, DnaK hydrolyzes its bound ATP, resulting in the formation of a stable complex. GrpE releases ADP from DnaK; ATP binding to DnaK triggers the release of the substrate protein, thus completing the reaction cycle. Several rounds of ATP-dependent interactions between DnaJ, DnaK and GrpE are required for fully efficient folding. Also involved, together with DnaK and GrpE, in the DNA replication of plasmids through activation of initiation proteins. The polypeptide is Chaperone protein DnaJ (Shewanella sp. (strain MR-4)).